The sequence spans 102 residues: Large ribosomal subunit protein uL24 (102 aa).

This sequence belongs to the universal ribosomal protein uL24 family. Part of the 50S ribosomal subunit.

Functionally, one of two assembly initiator proteins, it binds directly to the 5'-end of the 23S rRNA, where it nucleates assembly of the 50S subunit. One of the proteins that surrounds the polypeptide exit tunnel on the outside of the subunit. The chain is Large ribosomal subunit protein uL24 from Finegoldia magna (strain ATCC 29328 / DSM 20472 / WAL 2508) (Peptostreptococcus magnus).